We begin with the raw amino-acid sequence, 690 residues long: Glycine--tRNA ligase beta subunit (690 aa).

Belongs to the class-II aminoacyl-tRNA synthetase family. As to quaternary structure, tetramer of two alpha and two beta subunits.

The protein resides in the cytoplasm. The catalysed reaction is tRNA(Gly) + glycine + ATP = glycyl-tRNA(Gly) + AMP + diphosphate. The chain is Glycine--tRNA ligase beta subunit from Pediococcus pentosaceus (strain ATCC 25745 / CCUG 21536 / LMG 10740 / 183-1w).